A 212-amino-acid polypeptide reads, in one-letter code: Thymidylate kinase (212 aa).

Alanine 2 is subject to N-acetylalanine. ATP-binding positions include 16-21 (RAGKTT) and arginine 97. The LID stretch occupies residues 133–157 (LQLQLLDAAARGEFGLERYETGTFQ). Residues lysine 182 and arginine 192 each contribute to the ATP site.

This sequence belongs to the thymidylate kinase family. As to quaternary structure, homodimer. The cofactor is Mg(2+).

The catalysed reaction is dTMP + ATP = dTDP + ADP. It functions in the pathway pyrimidine metabolism; dTTP biosynthesis. Functionally, catalyzes the phosphorylation of thymidine monophosphate (dTMP) to thymidine diphosphate (dTDP), the immediate precursor for the DNA building block dTTP, with ATP as the preferred phosphoryl donor in the presence of Mg(2+). This is Thymidylate kinase (Dtymk) from Mus musculus (Mouse).